Reading from the N-terminus, the 313-residue chain is Acetyl-coenzyme A carboxylase carboxyl transferase subunit alpha (313 aa).

The 255-residue stretch at 34-288 folds into the CoA carboxyltransferase C-terminal domain; it reads KLKDQRDIAL…KNVVLEAVNE (255 aa).

It belongs to the AccA family. In terms of assembly, acetyl-CoA carboxylase is a heterohexamer composed of biotin carboxyl carrier protein (AccB), biotin carboxylase (AccC) and two subunits each of ACCase subunit alpha (AccA) and ACCase subunit beta (AccD).

The protein resides in the cytoplasm. The enzyme catalyses N(6)-carboxybiotinyl-L-lysyl-[protein] + acetyl-CoA = N(6)-biotinyl-L-lysyl-[protein] + malonyl-CoA. Its pathway is lipid metabolism; malonyl-CoA biosynthesis; malonyl-CoA from acetyl-CoA: step 1/1. In terms of biological role, component of the acetyl coenzyme A carboxylase (ACC) complex. First, biotin carboxylase catalyzes the carboxylation of biotin on its carrier protein (BCCP) and then the CO(2) group is transferred by the carboxyltransferase to acetyl-CoA to form malonyl-CoA. This Fusobacterium nucleatum subsp. nucleatum (strain ATCC 25586 / DSM 15643 / BCRC 10681 / CIP 101130 / JCM 8532 / KCTC 2640 / LMG 13131 / VPI 4355) protein is Acetyl-coenzyme A carboxylase carboxyl transferase subunit alpha.